Reading from the N-terminus, the 457-residue chain is Argininosuccinate lyase (457 aa).

This sequence belongs to the lyase 1 family. Argininosuccinate lyase subfamily.

It localises to the cytoplasm. It carries out the reaction 2-(N(omega)-L-arginino)succinate = fumarate + L-arginine. The protein operates within amino-acid biosynthesis; L-arginine biosynthesis; L-arginine from L-ornithine and carbamoyl phosphate: step 3/3. This is Argininosuccinate lyase from Psychrobacter cryohalolentis (strain ATCC BAA-1226 / DSM 17306 / VKM B-2378 / K5).